Here is a 271-residue protein sequence, read N- to C-terminus: Purine nucleoside phosphorylase 1 (271 aa).

Phosphate-binding positions include Ser28, His59, 79–81 (RFH), and Ala111. Ser28 is modified (phosphoserine). Glu191 lines the a purine D-ribonucleoside pocket. Ser210 provides a ligand contact to phosphate. A purine D-ribonucleoside is bound at residue Asn233.

This sequence belongs to the PNP/MTAP phosphorylase family. Homotrimer.

It catalyses the reaction a purine 2'-deoxy-D-ribonucleoside + phosphate = a purine nucleobase + 2-deoxy-alpha-D-ribose 1-phosphate. It functions in the pathway purine metabolism; purine nucleoside salvage. Functionally, the purine nucleoside phosphorylases catalyze the phosphorolytic breakdown of the N-glycosidic bond in the beta-(deoxy)ribonucleoside molecules, with the formation of the corresponding free purine bases and pentose-1-phosphate. Cleaves guanosine, inosine, 2'-deoxyguanosine and 2'-deoxyinosine. This chain is Purine nucleoside phosphorylase 1 (punA), found in Bacillus subtilis (strain 168).